Reading from the N-terminus, the 622-residue chain is Cilia- and flagella-associated protein 206 (622 aa).

Residues 568 to 593 (NTSQVYPLKEASTQSKREGSSRVPRP) are disordered.

Belongs to the CFAP206 family. Expressed in the sperm, oviduct, lung, nasal cavity, brain ependyma and choroid plexus.

It localises to the cytoplasm. The protein localises to the cytoskeleton. It is found in the cilium axoneme. Its subcellular location is the cilium basal body. Its function is as follows. Essential for sperm motility and is involved in the regulation of the beating frequency of motile cilia on the epithelial cells of the respiratory tract. Required for the establishment of radial spokes in sperm flagella. The sequence is that of Cilia- and flagella-associated protein 206 from Mus musculus (Mouse).